A 179-amino-acid chain; its full sequence is Acireductone dioxygenase (179 aa).

Fe(2+)-binding residues include H99, H101, E105, and H143. H99, H101, E105, and H143 together coordinate Ni(2+).

This sequence belongs to the acireductone dioxygenase (ARD) family. As to quaternary structure, monomer. It depends on Fe(2+) as a cofactor. Ni(2+) is required as a cofactor.

It carries out the reaction 1,2-dihydroxy-5-(methylsulfanyl)pent-1-en-3-one + O2 = 3-(methylsulfanyl)propanoate + CO + formate + 2 H(+). It catalyses the reaction 1,2-dihydroxy-5-(methylsulfanyl)pent-1-en-3-one + O2 = 4-methylsulfanyl-2-oxobutanoate + formate + 2 H(+). It functions in the pathway amino-acid biosynthesis; L-methionine biosynthesis via salvage pathway; L-methionine from S-methyl-5-thio-alpha-D-ribose 1-phosphate: step 5/6. In terms of biological role, catalyzes 2 different reactions between oxygen and the acireductone 1,2-dihydroxy-3-keto-5-methylthiopentene (DHK-MTPene) depending upon the metal bound in the active site. Fe-containing acireductone dioxygenase (Fe-ARD) produces formate and 2-keto-4-methylthiobutyrate (KMTB), the alpha-ketoacid precursor of methionine in the methionine recycle pathway. Ni-containing acireductone dioxygenase (Ni-ARD) produces methylthiopropionate, carbon monoxide and formate, and does not lie on the methionine recycle pathway. This is Acireductone dioxygenase from Sulfurihydrogenibium sp. (strain YO3AOP1).